Reading from the N-terminus, the 297-residue chain is Bifunctional protein FolD (297 aa).

Residues 167 to 169, serine 192, and isoleucine 233 contribute to the NADP(+) site; that span reads GRS.

It belongs to the tetrahydrofolate dehydrogenase/cyclohydrolase family. Homodimer.

It carries out the reaction (6R)-5,10-methylene-5,6,7,8-tetrahydrofolate + NADP(+) = (6R)-5,10-methenyltetrahydrofolate + NADPH. The enzyme catalyses (6R)-5,10-methenyltetrahydrofolate + H2O = (6R)-10-formyltetrahydrofolate + H(+). Its pathway is one-carbon metabolism; tetrahydrofolate interconversion. Catalyzes the oxidation of 5,10-methylenetetrahydrofolate to 5,10-methenyltetrahydrofolate and then the hydrolysis of 5,10-methenyltetrahydrofolate to 10-formyltetrahydrofolate. The chain is Bifunctional protein FolD from Caulobacter vibrioides (strain ATCC 19089 / CIP 103742 / CB 15) (Caulobacter crescentus).